The following is a 507-amino-acid chain: Methionine--tRNA ligase (507 aa).

The 'HIGH' region motif lies at 12–22 (YYVNDVSHIGH). Residues 295–299 (KISKS) carry the 'KMSKS' region motif. Lys-298 is a binding site for ATP.

The protein belongs to the class-I aminoacyl-tRNA synthetase family. MetG type 2B subfamily. Monomer.

It is found in the cytoplasm. It carries out the reaction tRNA(Met) + L-methionine + ATP = L-methionyl-tRNA(Met) + AMP + diphosphate. Its function is as follows. Is required not only for elongation of protein synthesis but also for the initiation of all mRNA translation through initiator tRNA(fMet) aminoacylation. The polypeptide is Methionine--tRNA ligase (Rickettsia typhi (strain ATCC VR-144 / Wilmington)).